The sequence spans 417 residues: UDP-N-acetylmuramoylalanine--D-glutamate ligase (417 aa).

Position 108 to 114 (108 to 114 (GSNGKTT)) interacts with ATP.

It belongs to the MurCDEF family.

Its subcellular location is the cytoplasm. The catalysed reaction is UDP-N-acetyl-alpha-D-muramoyl-L-alanine + D-glutamate + ATP = UDP-N-acetyl-alpha-D-muramoyl-L-alanyl-D-glutamate + ADP + phosphate + H(+). Its pathway is cell wall biogenesis; peptidoglycan biosynthesis. In terms of biological role, cell wall formation. Catalyzes the addition of glutamate to the nucleotide precursor UDP-N-acetylmuramoyl-L-alanine (UMA). The protein is UDP-N-acetylmuramoylalanine--D-glutamate ligase of Chlamydia pneumoniae (Chlamydophila pneumoniae).